Consider the following 420-residue polypeptide: Xyloglucan O-acetyltransferase 4 (420 aa).

Residues 1-30 (MTMHEKMKLPSCSCSAFKCGKKDRWLNMER) lie on the Cytoplasmic side of the membrane. Residues 31-51 (PIPFLLIGLTTILSVFILYTL) form a helical; Signal-anchor for type II membrane protein membrane-spanning segment. The Lumenal portion of the chain corresponds to 52-420 (NPLKFVIEHN…LLLAVLRRLD (369 aa)). Cystine bridges form between cysteine 78-cysteine 128, cysteine 99-cysteine 164, cysteine 108-cysteine 400, and cysteine 323-cysteine 396. Asparagine 96 is a glycosylation site (N-linked (GlcNAc...) asparagine). The GDS motif motif lies at 151 to 153 (GDS). The active-site Nucleophile is the serine 153. N-linked (GlcNAc...) asparagine glycans are attached at residues asparagine 192, asparagine 212, asparagine 270, and asparagine 324. The Proton donor role is filled by aspartate 395. A DXXH motif motif is present at residues 395–398 (DCVH). Histidine 398 (proton acceptor) is an active-site residue.

Belongs to the PC-esterase family. TBL subfamily.

It is found in the golgi apparatus membrane. In terms of biological role, xyloglucan acetyltransferase that catalyzes the acetylation of fucosylated Gal residues on xyloglucan side chains. Predominantly catalyze 6-O-monoacetylation of Gal residues in the Fuc-Gal-Xyl trisaccharide side chains of xyloglucan oligomers. The chain is Xyloglucan O-acetyltransferase 4 from Populus trichocarpa (Western balsam poplar).